A 608-amino-acid chain; its full sequence is UvrABC system protein C (608 aa).

In terms of domain architecture, GIY-YIG spans 15–93 (HQPGVYRMYN…IKQYLPKYNV (79 aa)). Positions 203-238 (RQVIQSLVEQMEGASQALNFEKAATIRDQIQSMRRV) constitute a UVR domain.

This sequence belongs to the UvrC family. Interacts with UvrB in an incision complex.

It is found in the cytoplasm. In terms of biological role, the UvrABC repair system catalyzes the recognition and processing of DNA lesions. UvrC both incises the 5' and 3' sides of the lesion. The N-terminal half is responsible for the 3' incision and the C-terminal half is responsible for the 5' incision. The sequence is that of UvrABC system protein C from Aliivibrio salmonicida (strain LFI1238) (Vibrio salmonicida (strain LFI1238)).